Consider the following 457-residue polypeptide: tRNA-2-methylthio-N(6)-dimethylallyladenosine synthase (457 aa).

Residues 4 to 119 (RNFHIITFGC…APDAIERLYA (116 aa)) enclose the MTTase N-terminal domain. 6 residues coordinate [4Fe-4S] cluster: Cys-13, Cys-48, Cys-82, Cys-164, Cys-168, and Cys-171. The region spanning 150–385 (NTLALMAYVN…QATQLEHSTS (236 aa)) is the Radical SAM core domain. The 69-residue stretch at 388–456 (KSRVGVETTV…KHSLVAEPLI (69 aa)) folds into the TRAM domain.

Belongs to the methylthiotransferase family. MiaB subfamily. In terms of assembly, monomer. The cofactor is [4Fe-4S] cluster.

It is found in the cytoplasm. It carries out the reaction N(6)-dimethylallyladenosine(37) in tRNA + (sulfur carrier)-SH + AH2 + 2 S-adenosyl-L-methionine = 2-methylsulfanyl-N(6)-dimethylallyladenosine(37) in tRNA + (sulfur carrier)-H + 5'-deoxyadenosine + L-methionine + A + S-adenosyl-L-homocysteine + 2 H(+). Catalyzes the methylthiolation of N6-(dimethylallyl)adenosine (i(6)A), leading to the formation of 2-methylthio-N6-(dimethylallyl)adenosine (ms(2)i(6)A) at position 37 in tRNAs that read codons beginning with uridine. The chain is tRNA-2-methylthio-N(6)-dimethylallyladenosine synthase from Lawsonia intracellularis (strain PHE/MN1-00).